A 242-amino-acid polypeptide reads, in one-letter code: Ribonuclease PH (242 aa).

Residues R89 and 127 to 129 (GTR) each bind phosphate.

This sequence belongs to the RNase PH family. Homohexameric ring arranged as a trimer of dimers.

The catalysed reaction is tRNA(n+1) + phosphate = tRNA(n) + a ribonucleoside 5'-diphosphate. In terms of biological role, phosphorolytic 3'-5' exoribonuclease that plays an important role in tRNA 3'-end maturation. Removes nucleotide residues following the 3'-CCA terminus of tRNAs; can also add nucleotides to the ends of RNA molecules by using nucleoside diphosphates as substrates, but this may not be physiologically important. Probably plays a role in initiation of 16S rRNA degradation (leading to ribosome degradation) during starvation. This is Ribonuclease PH from Neisseria meningitidis serogroup A / serotype 4A (strain DSM 15465 / Z2491).